Consider the following 129-residue polypeptide: Small ribosomal subunit protein uS12 (129 aa).

The tract at residues 110–129 is disordered; it reads RKQGRSRYGAHRKQVAATKK.

This sequence belongs to the universal ribosomal protein uS12 family. Part of the 30S ribosomal subunit. Contacts proteins S8 and S17. May interact with IF1 in the 30S initiation complex.

Its function is as follows. With S4 and S5 plays an important role in translational accuracy. In terms of biological role, interacts with and stabilizes bases of the 16S rRNA that are involved in tRNA selection in the A site and with the mRNA backbone. Located at the interface of the 30S and 50S subunits, it traverses the body of the 30S subunit contacting proteins on the other side and probably holding the rRNA structure together. The combined cluster of proteins S8, S12 and S17 appears to hold together the shoulder and platform of the 30S subunit. The chain is Small ribosomal subunit protein uS12 from Rickettsia prowazekii (strain Madrid E).